A 479-amino-acid polypeptide reads, in one-letter code: Cardiolipin synthase A (479 aa).

The next 2 helical transmembrane spans lie at 8 to 28 (FFGY…LHAV) and 38 to 58 (IAWA…YLVF). 2 PLD phosphodiesterase domains span residues 218–245 (VNFR…GDEY) and 392–419 (QPGF…DNRS). Active-site residues include histidine 223, lysine 225, aspartate 230, histidine 397, lysine 399, and aspartate 404.

This sequence belongs to the phospholipase D family. Cardiolipin synthase subfamily. ClsA sub-subfamily.

The protein localises to the cell inner membrane. It carries out the reaction 2 a 1,2-diacyl-sn-glycero-3-phospho-(1'-sn-glycerol) = a cardiolipin + glycerol. Functionally, catalyzes the reversible phosphatidyl group transfer from one phosphatidylglycerol molecule to another to form cardiolipin (CL) (diphosphatidylglycerol) and glycerol. The protein is Cardiolipin synthase A of Pseudomonas putida (strain W619).